Reading from the N-terminus, the 219-residue chain is Cytidylate kinase (219 aa).

Position 11-19 (11-19) interacts with ATP; sequence GPAGVGKTT.

Belongs to the cytidylate kinase family. Type 1 subfamily.

The protein localises to the cytoplasm. The catalysed reaction is CMP + ATP = CDP + ADP. The enzyme catalyses dCMP + ATP = dCDP + ADP. In Oleidesulfovibrio alaskensis (strain ATCC BAA-1058 / DSM 17464 / G20) (Desulfovibrio alaskensis), this protein is Cytidylate kinase.